An 84-amino-acid chain; its full sequence is Small ribosomal subunit protein bS18 (84 aa).

It belongs to the bacterial ribosomal protein bS18 family. Part of the 30S ribosomal subunit. Forms a tight heterodimer with protein bS6.

Functionally, binds as a heterodimer with protein bS6 to the central domain of the 16S rRNA, where it helps stabilize the platform of the 30S subunit. This chain is Small ribosomal subunit protein bS18, found in Dictyoglomus turgidum (strain DSM 6724 / Z-1310).